Reading from the N-terminus, the 84-residue chain is RNA-binding protein Hfq (84 aa).

Residues 10–70 enclose the Sm domain; sequence DLFLNVLRRD…ISTIMPFRPV (61 aa).

Belongs to the Hfq family. Homohexamer.

RNA chaperone that binds small regulatory RNA (sRNAs) and mRNAs to facilitate mRNA translational regulation in response to envelope stress, environmental stress and changes in metabolite concentrations. Also binds with high specificity to tRNAs. The chain is RNA-binding protein Hfq from Moorella thermoacetica (strain ATCC 39073 / JCM 9320).